The sequence spans 197 residues: Large ribosomal subunit protein bL9 (197 aa).

The tract at residues Gly178–Gln197 is disordered. A compositionally biased stretch (acidic residues) spans Phe181–Ala191.

This sequence belongs to the bacterial ribosomal protein bL9 family.

In terms of biological role, binds to the 23S rRNA. The polypeptide is Large ribosomal subunit protein bL9 (Bradyrhizobium sp. (strain BTAi1 / ATCC BAA-1182)).